The chain runs to 505 residues: Aspartyl/glutamyl-tRNA(Asn/Gln) amidotransferase subunit B (505 aa).

This sequence belongs to the GatB/GatE family. GatB subfamily. Heterotrimer of A, B and C subunits.

The enzyme catalyses L-glutamyl-tRNA(Gln) + L-glutamine + ATP + H2O = L-glutaminyl-tRNA(Gln) + L-glutamate + ADP + phosphate + H(+). It catalyses the reaction L-aspartyl-tRNA(Asn) + L-glutamine + ATP + H2O = L-asparaginyl-tRNA(Asn) + L-glutamate + ADP + phosphate + 2 H(+). Allows the formation of correctly charged Asn-tRNA(Asn) or Gln-tRNA(Gln) through the transamidation of misacylated Asp-tRNA(Asn) or Glu-tRNA(Gln) in organisms which lack either or both of asparaginyl-tRNA or glutaminyl-tRNA synthetases. The reaction takes place in the presence of glutamine and ATP through an activated phospho-Asp-tRNA(Asn) or phospho-Glu-tRNA(Gln). The protein is Aspartyl/glutamyl-tRNA(Asn/Gln) amidotransferase subunit B of Kineococcus radiotolerans (strain ATCC BAA-149 / DSM 14245 / SRS30216).